The following is a 507-amino-acid chain: Histidine ammonia-lyase (507 aa).

The 5-imidazolinone (Ala-Gly) cross-link spans 141–143; it reads ASG. Ser142 bears the 2,3-didehydroalanine (Ser) mark.

It belongs to the PAL/histidase family. Contains an active site 4-methylidene-imidazol-5-one (MIO), which is formed autocatalytically by cyclization and dehydration of residues Ala-Ser-Gly.

Its subcellular location is the cytoplasm. The enzyme catalyses L-histidine = trans-urocanate + NH4(+). Its pathway is amino-acid degradation; L-histidine degradation into L-glutamate; N-formimidoyl-L-glutamate from L-histidine: step 1/3. The protein is Histidine ammonia-lyase of Burkholderia cenocepacia (strain HI2424).